The chain runs to 56 residues: MAHENVWFSHPRNFGKGSRQCRHCSSHSGLIRKYGLDLCRQCFREKAADIGFNKYR.

Residues Cys-21, Cys-24, Cys-39, and Cys-42 each coordinate Zn(2+).

Belongs to the universal ribosomal protein uS14 family. As to quaternary structure, component of the small ribosomal subunit. Mature ribosomes consist of a small (40S) and a large (60S) subunit. The 40S subunit contains about 32 different proteins and 1 molecule of RNA (18S). The 60S subunit contains 45 different proteins and 3 molecules of RNA (25S, 5.8S and 5S). The cofactor is Zn(2+).

The protein localises to the cytoplasm. In terms of biological role, component of the ribosome, a large ribonucleoprotein complex responsible for the synthesis of proteins in the cell. The small ribosomal subunit (SSU) binds messenger RNAs (mRNAs) and translates the encoded message by selecting cognate aminoacyl-transfer RNA (tRNA) molecules. The large subunit (LSU) contains the ribosomal catalytic site termed the peptidyl transferase center (PTC), which catalyzes the formation of peptide bonds, thereby polymerizing the amino acids delivered by tRNAs into a polypeptide chain. The nascent polypeptides leave the ribosome through a tunnel in the LSU and interact with protein factors that function in enzymatic processing, targeting, and the membrane insertion of nascent chains at the exit of the ribosomal tunnel. This is Small ribosomal subunit protein uS14 from Candida albicans (strain SC5314 / ATCC MYA-2876) (Yeast).